Consider the following 420-residue polypeptide: MSNTQKQLALAKAAKKSVNTADTEEKNRALFAMADSLEAAAADILAANRQDLEAAAGNIPESMTDRLLLDGKRICAMADGIRAVAALPDPVGEILETSTLPNGLEIVKKRVAMGVIGIIYESRPNVTSDAAALALKSGSAVVLRSGKDAFQSARAIVAALKTGLAQTRIDPDALQLIEDTGRESSYEMMRAKDYLDLLIPRGGAGLIRAVVENAVVPVIETGTGIVHIYIDKDADWDKALRIVYNAKTSRPSVCNSMEVLLVHEDIAADFLPKLERLLVRNRIEAGLPPVRFRLDPQAARHIGGEAAGADDFDTEFLDYILAVKTVASVEEAVGHIEAHGTHHSDGIVTENRHAADYFTTHIDSAAVYVNASTRFTDGGEFGLGCEMGISTQKLHARGPMGLKELTSYKYIVQGTGQVRE.

This sequence belongs to the gamma-glutamyl phosphate reductase family.

The protein localises to the cytoplasm. It carries out the reaction L-glutamate 5-semialdehyde + phosphate + NADP(+) = L-glutamyl 5-phosphate + NADPH + H(+). It participates in amino-acid biosynthesis; L-proline biosynthesis; L-glutamate 5-semialdehyde from L-glutamate: step 2/2. Its function is as follows. Catalyzes the NADPH-dependent reduction of L-glutamate 5-phosphate into L-glutamate 5-semialdehyde and phosphate. The product spontaneously undergoes cyclization to form 1-pyrroline-5-carboxylate. This is Gamma-glutamyl phosphate reductase from Neisseria meningitidis serogroup A / serotype 4A (strain DSM 15465 / Z2491).